The primary structure comprises 309 residues: Ribosomal RNA small subunit methyltransferase H (309 aa).

Residues 33–35 (GGH), D53, F79, D100, and Q107 each bind S-adenosyl-L-methionine.

It belongs to the methyltransferase superfamily. RsmH family.

Its subcellular location is the cytoplasm. It carries out the reaction cytidine(1402) in 16S rRNA + S-adenosyl-L-methionine = N(4)-methylcytidine(1402) in 16S rRNA + S-adenosyl-L-homocysteine + H(+). Its function is as follows. Specifically methylates the N4 position of cytidine in position 1402 (C1402) of 16S rRNA. This chain is Ribosomal RNA small subunit methyltransferase H, found in Clostridium botulinum (strain ATCC 19397 / Type A).